Consider the following 153-residue polypeptide: Cytochrome c-type biogenesis protein CcmE (153 aa).

Residues 1–6 (MNARRR) lie on the Cytoplasmic side of the membrane. The chain crosses the membrane as a helical; Signal-anchor for type II membrane protein span at residues 7 to 27 (LWSLLMLILAVGTAATLTIMA). At 28–153 (LRRNLTYLYM…LDTPIAQTTP (126 aa)) the chain is on the periplasmic side. Residues H121 and Y125 each contribute to the heme site. A compositionally biased stretch (polar residues) spans 130–141 (LTNKMQPTPTQH). The interval 130–153 (LTNKMQPTPTQHTHLDTPIAQTTP) is disordered.

It belongs to the CcmE/CycJ family.

The protein resides in the cell inner membrane. In terms of biological role, heme chaperone required for the biogenesis of c-type cytochromes. Transiently binds heme delivered by CcmC and transfers the heme to apo-cytochromes in a process facilitated by CcmF and CcmH. The chain is Cytochrome c-type biogenesis protein CcmE from Xylella fastidiosa (strain 9a5c).